A 127-amino-acid chain; its full sequence is Small ribosomal subunit protein uS11 (127 aa).

It belongs to the universal ribosomal protein uS11 family. Part of the 30S ribosomal subunit. Interacts with proteins S7 and S18. Binds to IF-3.

Located on the platform of the 30S subunit, it bridges several disparate RNA helices of the 16S rRNA. Forms part of the Shine-Dalgarno cleft in the 70S ribosome. The polypeptide is Small ribosomal subunit protein uS11 (Streptococcus pyogenes serotype M1).